The sequence spans 74 residues: Large ribosomal subunit protein bL27c (74 aa).

This sequence belongs to the bacterial ribosomal protein bL27 family.

It is found in the plastid. It localises to the chloroplast. This Pleurochrysis haptonemofera (Unicellular marine alga) protein is Large ribosomal subunit protein bL27c (rpl27).